Here is a 919-residue protein sequence, read N- to C-terminus: MDPPPRPRPHRVAVLLLLLLASSPAARAWKKDEFRNCNQTPFCKRARTRAPHSLDAPLSLDAASLAVATDGSLTASLSHPSRLRPLLLRLSALPPHALRLQIDEDYSSNTPPHRRFQVPDVLLPDVEARTLHLPQPKTSAAGVSTFALSSDVDVVVKHDPFELTVRRAGSGAPVLSFNSHGLFDFEPLQESKQEGETWEEQFRSHTDTRPRGPQSITFDVSFYGADFVYGLPEHGSTSLALRPTRGPGAEESEPYRLFNLDVFEYLHESPFGLYGSIPFMIAHGDGPSSGFFWLNAAEMQIDVLAPGWDGASSTENGRIDTLWMAEAGVVDAFFFVGSEPKDVIKQYISVTGTPSMPQQFAVAYHQCRWNYRDEEDVAGVDSGFDEHDIPYDVLWLDIEHTDGKRYFTWDHSAFPNPEVMQGKIADKGRKMVTIVDPHIKRDSSFHLHEEATAKGYYVKDATGKDFDGWCWPGASSYPDMLNPEIREWWADKFSYENYKGSTPTLYIWNDMNEPSVFNGPEVTMPRDAVHYGDVEHRELHNAYGYYFHMATADGLLKRGEGKDRPFVLSRAFFAGSQRYGAIWTGDNSADWDHLKSSIPMVLTLGLTGMTFSGADIGGFFGNPEPDLLVRWYQVGAFYPFFRGHAHHDTKRREPWLFGERRTALMREAIHMRYSLLPYYYTLFREASVTGVPVMRPLWLEFPDDKETYNNGEAFMVGPSLLAQGIYEEGQKSVSVYLPGEELWYDLRNGSPYKGGVSHKLEVSEDSIPSFQRAGAIVPRKDRFRRSSTQMVNDPYTLVIALNSSSAAEGELYVDDGKSYDYQQGAFIHRRFVFADNKLTSMNIAPKNLGNKKFSTECVIERIIILGVSSGSKKAIVEPGNHEVDIELGPISLRSGSSSVAPTVRKPNVRVVDDWTIRIA.

Residues 1 to 28 form the signal peptide; sequence MDPPPRPRPHRVAVLLLLLLASSPAARA. The active-site Nucleophile is the aspartate 510. Glutamate 513 is a catalytic residue. Aspartate 586 functions as the Proton donor in the catalytic mechanism. Asparagine 802 carries an N-linked (GlcNAc...) asparagine glycan.

The protein belongs to the glycosyl hydrolase 31 family. Heterodimer of a catalytic alpha subunit and a beta subunit.

Its subcellular location is the endoplasmic reticulum. It catalyses the reaction N(4)-(alpha-D-Glc-(1-&gt;3)-alpha-D-Man-(1-&gt;2)-alpha-D-Man-(1-&gt;2)-alpha-D-Man-(1-&gt;3)-[alpha-D-Man-(1-&gt;2)-alpha-D-Man-(1-&gt;3)-[alpha-D-Man-(1-&gt;2)-alpha-D-Man-(1-&gt;6)]-alpha-D-Man-(1-&gt;6)]-beta-D-Man-(1-&gt;4)-beta-D-GlcNAc-(1-&gt;4)-beta-D-GlcNAc)-L-asparaginyl-[protein] + H2O = N(4)-(alpha-D-Man-(1-&gt;2)-alpha-D-Man-(1-&gt;2)-alpha-D-Man-(1-&gt;3)-[alpha-D-Man-(1-&gt;2)-alpha-D-Man-(1-&gt;3)-[alpha-D-Man-(1-&gt;2)-alpha-D-Man-(1-&gt;6)]-alpha-D-Man-(1-&gt;6)]-beta-D-Man-(1-&gt;4)-beta-D-GlcNAc-(1-&gt;4)-beta-D-GlcNAc)-L-asparaginyl-[protein] (N-glucan mannose isomer 9A1,2,3B1,2,3) + beta-D-glucose. The enzyme catalyses N(4)-(alpha-D-Glc-(1-&gt;3)-alpha-D-Glc-(1-&gt;3)-alpha-D-Man-(1-&gt;2)-alpha-D-Man-(1-&gt;2)-alpha-D-Man-(1-&gt;3)-[alpha-D-Man-(1-&gt;2)-alpha-D-Man-(1-&gt;3)-[alpha-D-Man-(1-&gt;2)-alpha-D-Man-(1-&gt;6)]-alpha-D-Man-(1-&gt;6)]-beta-D-Man-(1-&gt;4)-beta-D-GlcNAc-(1-&gt;4)-beta-D-GlcNAc)-L-asparaginyl-[protein] + H2O = N(4)-(alpha-D-Glc-(1-&gt;3)-alpha-D-Man-(1-&gt;2)-alpha-D-Man-(1-&gt;2)-alpha-D-Man-(1-&gt;3)-[alpha-D-Man-(1-&gt;2)-alpha-D-Man-(1-&gt;3)-[alpha-D-Man-(1-&gt;2)-alpha-D-Man-(1-&gt;6)]-alpha-D-Man-(1-&gt;6)]-beta-D-Man-(1-&gt;4)-beta-D-GlcNAc-(1-&gt;4)-beta-D-GlcNAc)-L-asparaginyl-[protein] + beta-D-glucose. It functions in the pathway glycan metabolism; N-glycan metabolism. In terms of biological role, cleaves sequentially the 2 innermost alpha-1,3-linked glucose residues from the Glc(2)Man(9)GlcNAc(2) oligosaccharide precursor of immature glycoproteins. May be required for defense response elicited by pathogen-associated molecular patterns (PAMPs). In Oryza sativa subsp. japonica (Rice), this protein is Probable glucan 1,3-alpha-glucosidase.